Here is a 347-residue protein sequence, read N- to C-terminus: MKILGIETTCDETAAAVVTVGEEERGRILSNEVLSQIAEHAAYGGVVPEIAARAHVEVLDRLIARALQRAGTTLPEIDGIAVAAGPGLIGGVLIGLVTAKTLALVARKPLLAVNHLEAHALTPRLTDGLAFPYLLLLASGGHTQLVAVKGVGDYVRLGTTIDDAIGEAFDKVAKLLGLGYPGGPEVERQAQNGNPERFALPRPMLGRRQADFSLSGLKTALRIEAERLEPLASQDVADLCASFQAAVVDVVVDRVRVALRAFAGVAGHPTALVAAGGVAANGAIRRALAAQAGEVGLSFVAPPLPLCGDNGAMIAWAGLERLRLGLVDDLTVPARARWPFAEAAPAA.

The Fe cation site is built by histidine 115 and histidine 119. Residues 137–141, aspartate 170, glycine 183, and asparagine 281 each bind substrate; that span reads LASGG. Residue aspartate 309 coordinates Fe cation.

Belongs to the KAE1 / TsaD family. The cofactor is Fe(2+).

It localises to the cytoplasm. It carries out the reaction L-threonylcarbamoyladenylate + adenosine(37) in tRNA = N(6)-L-threonylcarbamoyladenosine(37) in tRNA + AMP + H(+). Its function is as follows. Required for the formation of a threonylcarbamoyl group on adenosine at position 37 (t(6)A37) in tRNAs that read codons beginning with adenine. Is involved in the transfer of the threonylcarbamoyl moiety of threonylcarbamoyl-AMP (TC-AMP) to the N6 group of A37, together with TsaE and TsaB. TsaD likely plays a direct catalytic role in this reaction. The protein is tRNA N6-adenosine threonylcarbamoyltransferase of Methylorubrum populi (strain ATCC BAA-705 / NCIMB 13946 / BJ001) (Methylobacterium populi).